The primary structure comprises 193 residues: Peptidyl-tRNA hydrolase (193 aa).

Tyrosine 16 contributes to the tRNA binding site. The Proton acceptor role is filled by histidine 21. Residues phenylalanine 67, asparagine 69, and asparagine 115 each coordinate tRNA.

Belongs to the PTH family. Monomer.

It is found in the cytoplasm. The catalysed reaction is an N-acyl-L-alpha-aminoacyl-tRNA + H2O = an N-acyl-L-amino acid + a tRNA + H(+). Functionally, hydrolyzes ribosome-free peptidyl-tRNAs (with 1 or more amino acids incorporated), which drop off the ribosome during protein synthesis, or as a result of ribosome stalling. Catalyzes the release of premature peptidyl moieties from peptidyl-tRNA molecules trapped in stalled 50S ribosomal subunits, and thus maintains levels of free tRNAs and 50S ribosomes. In Vesicomyosocius okutanii subsp. Calyptogena okutanii (strain HA), this protein is Peptidyl-tRNA hydrolase.